Consider the following 598-residue polypeptide: Rho-related protein racA (598 aa).

Residue 11–17 coordinates GTP; the sequence is DGAVGKS. The Effector region motif lies at 32-40; sequence YVPTVFDNY. Residues 57–61 and 115–118 contribute to the GTP site; these read DTAGQ and TKND. The disordered stretch occupies residues 175 to 210; it reads ASAKKKGGFFSSSSSSSSSSSSKSSEKSVPIPPVMP. A compositionally biased stretch (low complexity) spans 182–197; the sequence is GFFSSSSSSSSSSSSK. 2 consecutive BTB domains span residues 239-344 and 405-472; these read SDVK…NYLD and SDIQ…PIEE.

This sequence in the N-terminal section; belongs to the small GTPase superfamily. Rho family. As to quaternary structure, interacts with pakB.

The protein is Rho-related protein racA (racA) of Dictyostelium discoideum (Social amoeba).